Reading from the N-terminus, the 290-residue chain is Enoyl-CoA hydratase, mitochondrial (290 aa).

The transit peptide at M1–F27 directs the protein to the mitochondrion. T46 is modified (phosphothreonine). A98–K101 serves as a coordination point for substrate. K101 carries the N6-acetyllysine; alternate modification. K101 is subject to N6-succinyllysine; alternate. Position 114 is a phosphoserine (S114). K115 carries the post-translational modification N6-acetyllysine; alternate. N6-succinyllysine; alternate is present on K115. K118 carries the post-translational modification N6-acetyllysine. G141 is a binding site for substrate. K204 is subject to N6-succinyllysine. At K211 the chain carries N6-acetyllysine.

It belongs to the enoyl-CoA hydratase/isomerase family. Homohexamer; dimer of trimers. In terms of tissue distribution, liver, fibroblast, muscle. Barely detectable in spleen and kidney.

It localises to the mitochondrion matrix. It catalyses the reaction a (3S)-3-hydroxyacyl-CoA = a (2E)-enoyl-CoA + H2O. The enzyme catalyses a (3E)-enoyl-CoA = a 4-saturated (2E)-enoyl-CoA. It carries out the reaction (3E)-hexenoyl-CoA = (2E)-hexenoyl-CoA. The catalysed reaction is (3S)-3-hydroxybutanoyl-CoA = (2E)-butenoyl-CoA + H2O. It catalyses the reaction 3-hydroxyisovaleryl-CoA = 3-methylbut-2-enoyl-CoA + H2O. The enzyme catalyses 3-hydroxypropanoyl-CoA = acryloyl-CoA + H2O. It carries out the reaction 3-hydroxybutanoyl-CoA = (2E)-butenoyl-CoA + H2O. The catalysed reaction is 2-methylpropenoyl-CoA + H2O = (S)-3-hydroxyisobutanoyl-CoA. It catalyses the reaction (3S)-hydroxyhexanoyl-CoA = (2E)-hexenoyl-CoA + H2O. The enzyme catalyses (3S)-hydroxydecanoyl-CoA = (2E)-decenoyl-CoA + H2O. Its pathway is lipid metabolism; fatty acid beta-oxidation. Converts unsaturated trans-2-enoyl-CoA species ((2E)-enoyl-CoA) to the corresponding (3S)-3hydroxyacyl-CoA species through addition of a water molecule to the double bond. Catalyzes the hydration of medium- and short-chained fatty enoyl-CoA thioesters from 4 carbons long (C4) up to C16. Has high substrate specificity for crotonyl-CoA ((2E)-butenoyl-CoA) and moderate specificity for acryloyl-CoA, 3-methylcrotonyl-CoA (3-methyl-(2E)-butenoyl-CoA) and methacrylyl-CoA ((2E)-2-methylpropenoyl-CoA). Can bind tiglyl-CoA (2-methylcrotonoyl-CoA), but hydrates only a small amount of this substrate. Plays a key role in the beta-oxidation spiral of short- and medium-chain fatty acid oxidation. At a lower rate than the hydratase reaction, catalyzes the isomerase reaction of trans-3-enoyl-CoA species (such as (3E)-hexenoyl-CoA) to trans-2-enoyl-CoA species (such as (2E)-hexenoyl-CoA), which are subsequently hydrated to 3(S)-3-hydroxyacyl-CoA species (such as (3S)-hydroxyhexanoyl-CoA). The polypeptide is Enoyl-CoA hydratase, mitochondrial (Homo sapiens (Human)).